We begin with the raw amino-acid sequence, 410 residues long: Peptidase T (410 aa).

Zn(2+) is bound at residue His79. Asp81 is a catalytic residue. Residue Asp142 coordinates Zn(2+). Glu176 (proton acceptor) is an active-site residue. Zn(2+)-binding residues include Glu177, Asp199, and His381.

Belongs to the peptidase M20B family. Zn(2+) is required as a cofactor.

Its subcellular location is the cytoplasm. The enzyme catalyses Release of the N-terminal residue from a tripeptide.. Functionally, cleaves the N-terminal amino acid of tripeptides. The protein is Peptidase T of Bacillus cereus (strain ATCC 10987 / NRS 248).